Reading from the N-terminus, the 115-residue chain is NADH-ubiquinone oxidoreductase chain 3 (115 aa).

Helical transmembrane passes span 4–24, 55–75, and 86–106; these read IMVI…AFWL, FFLV…LLPI, and TMML…AYEW.

It belongs to the complex I subunit 3 family. As to quaternary structure, core subunit of respiratory chain NADH dehydrogenase (Complex I) which is composed of 45 different subunits. Interacts with TMEM186. Interacts with TMEM242.

It localises to the mitochondrion inner membrane. The enzyme catalyses a ubiquinone + NADH + 5 H(+)(in) = a ubiquinol + NAD(+) + 4 H(+)(out). In terms of biological role, core subunit of the mitochondrial membrane respiratory chain NADH dehydrogenase (Complex I) which catalyzes electron transfer from NADH through the respiratory chain, using ubiquinone as an electron acceptor. Essential for the catalytic activity of complex I. The chain is NADH-ubiquinone oxidoreductase chain 3 from Baiomys taylori (Northern pygmy mouse).